The chain runs to 90 residues: Small ribosomal subunit protein uS15 (90 aa).

Belongs to the universal ribosomal protein uS15 family. In terms of assembly, part of the 30S ribosomal subunit. Forms a bridge to the 50S subunit in the 70S ribosome, contacting the 23S rRNA.

One of the primary rRNA binding proteins, it binds directly to 16S rRNA where it helps nucleate assembly of the platform of the 30S subunit by binding and bridging several RNA helices of the 16S rRNA. Its function is as follows. Forms an intersubunit bridge (bridge B4) with the 23S rRNA of the 50S subunit in the ribosome. The polypeptide is Small ribosomal subunit protein uS15 (Aquifex aeolicus (strain VF5)).